The following is a 248-amino-acid chain: 4-hydroxy-tetrahydrodipicolinate reductase (248 aa).

Residues 74 to 76 (GTT) and 99 to 102 (SANF) each bind NAD(+). Histidine 134 functions as the Proton donor/acceptor in the catalytic mechanism. Histidine 135 contacts (S)-2,3,4,5-tetrahydrodipicolinate. Residue lysine 138 is the Proton donor of the active site. Residue 144–145 (GT) coordinates (S)-2,3,4,5-tetrahydrodipicolinate.

This sequence belongs to the DapB family.

The protein localises to the cytoplasm. It catalyses the reaction (S)-2,3,4,5-tetrahydrodipicolinate + NAD(+) + H2O = (2S,4S)-4-hydroxy-2,3,4,5-tetrahydrodipicolinate + NADH + H(+). The catalysed reaction is (S)-2,3,4,5-tetrahydrodipicolinate + NADP(+) + H2O = (2S,4S)-4-hydroxy-2,3,4,5-tetrahydrodipicolinate + NADPH + H(+). The protein operates within amino-acid biosynthesis; L-lysine biosynthesis via DAP pathway; (S)-tetrahydrodipicolinate from L-aspartate: step 4/4. Its function is as follows. Catalyzes the conversion of 4-hydroxy-tetrahydrodipicolinate (HTPA) to tetrahydrodipicolinate. The protein is 4-hydroxy-tetrahydrodipicolinate reductase of Chlorobium phaeobacteroides (strain BS1).